Here is an 84-residue protein sequence, read N- to C-terminus: Hydramacin-1 (84 aa).

Positions 1 to 24 (MRTVVFFILVSIFLVALKPTGTQA) are cleaved as a signal peptide. Q25 is subject to Pyrrolidone carboxylic acid. 4 cysteine pairs are disulfide-bonded: C29-C72, C36-C65, C51-C81, and C55-C83.

Expressed in the endodermal epithelium.

It localises to the secreted. The protein resides in the target cell membrane. Its function is as follows. Cationic antimicrobial peptide potently active against Gram-positive and Gram-negative bacteria including multi-resistant human pathogenic strains. Is not active against the Gram-positive Coccus species, Gram-negative non-fermentation species and against the fungus C.albicans. It leads to aggregation of bacteria as an initial step of its bactericidal mechanism. Aggregated cells are connected via electron-dense contacts and adopt a thorn apple-like morphology. Hydramycin contains a belt of positively charged residues that separate two hydrophobic areas. This structure may explain the observed aggregation of bacteria, since each of these areas can immerse into the outer leaflets of the membranes of two individual bacteria. Is able to permeabilize membranes of viable bacteria at low and neutral pH values, but no pore-forming activity is not detected. The chain is Hydramacin-1 from Hydra vulgaris (Hydra).